The primary structure comprises 125 residues: Small ribosomal subunit protein uS13 (125 aa).

This sequence belongs to the universal ribosomal protein uS13 family. In terms of assembly, part of the 30S ribosomal subunit. Forms a loose heterodimer with protein S19. Forms two bridges to the 50S subunit in the 70S ribosome.

Functionally, located at the top of the head of the 30S subunit, it contacts several helices of the 16S rRNA. In the 70S ribosome it contacts the 23S rRNA (bridge B1a) and protein L5 of the 50S subunit (bridge B1b), connecting the 2 subunits; these bridges are implicated in subunit movement. Contacts the tRNAs in the A and P-sites. The protein is Small ribosomal subunit protein uS13 of Orientia tsutsugamushi (strain Ikeda) (Rickettsia tsutsugamushi).